The chain runs to 390 residues: Protein-glutamate methylesterase/protein-glutamine glutaminase (390 aa).

The Response regulatory domain maps to 4–121 (RALVVDDSGF…SGDMEQVKRQ (118 aa)). Asp55 carries the 4-aspartylphosphate modification. Residues 130-198 (GGGRGAPAGR…AAPAPERGQR (69 aa)) form a disordered region. Composition is skewed to low complexity over residues 136–148 (PAGRAPRPAAPVD) and 179–193 (EAPVAPTGAPAAPAP). Residues 201-390 (PGALRLVVIG…QVGEELAKLR (190 aa)) enclose the CheB-type methylesterase domain. Active-site residues include Ser212, His239, and Asp335.

It belongs to the CheB family. Post-translationally, phosphorylated by CheA. Phosphorylation of the N-terminal regulatory domain activates the methylesterase activity.

The protein localises to the cytoplasm. The catalysed reaction is [protein]-L-glutamate 5-O-methyl ester + H2O = L-glutamyl-[protein] + methanol + H(+). It carries out the reaction L-glutaminyl-[protein] + H2O = L-glutamyl-[protein] + NH4(+). Functionally, involved in chemotaxis. Part of a chemotaxis signal transduction system that modulates chemotaxis in response to various stimuli. Catalyzes the demethylation of specific methylglutamate residues introduced into the chemoreceptors (methyl-accepting chemotaxis proteins or MCP) by CheR. Also mediates the irreversible deamidation of specific glutamine residues to glutamic acid. The protein is Protein-glutamate methylesterase/protein-glutamine glutaminase of Alkalilimnicola ehrlichii (strain ATCC BAA-1101 / DSM 17681 / MLHE-1).